The primary structure comprises 249 residues: MKYLVDTHTHTIASTHAYSTLQEYIAMAKHKGIKLFATTDHGPDMADAPHFWHFVNLRVLPRIVDGVGILRGIEANIKNVVGEIDFFGDYLQELDIVLAGFHEPVFAPSNKETHTAALINCIMSGHVDIITHPGNPAYPIDIAAVAKAAAENNVALEINNSSFLTSRKGSEHNCLAIAKAVKEAGGLLVMGSDSHVAYSLGDFTQAEQIIEQADFPIERLLNRSPEALLAFLSARGHGSLDEYSALLEN.

The Zn(2+) site is built by His8, His10, His16, His41, Glu74, His102, His132, Asp193, and His195.

It belongs to the PHP family. Requires Zn(2+) as cofactor.

The chain is Probable phosphatase Spea_1436 from Shewanella pealeana (strain ATCC 700345 / ANG-SQ1).